Reading from the N-terminus, the 125-residue chain is Small ribosomal subunit protein uS12 (125 aa).

At Asp89 the chain carries 3-methylthioaspartic acid. The interval 100-125 (GSLDTQGVQNRKQARSKYGAKRPKKA) is disordered. Residues 111–125 (KQARSKYGAKRPKKA) show a composition bias toward basic residues.

It belongs to the universal ribosomal protein uS12 family. In terms of assembly, part of the 30S ribosomal subunit. Contacts proteins S8 and S17. May interact with IF1 in the 30S initiation complex.

With S4 and S5 plays an important role in translational accuracy. Its function is as follows. Interacts with and stabilizes bases of the 16S rRNA that are involved in tRNA selection in the A site and with the mRNA backbone. Located at the interface of the 30S and 50S subunits, it traverses the body of the 30S subunit contacting proteins on the other side and probably holding the rRNA structure together. The combined cluster of proteins S8, S12 and S17 appears to hold together the shoulder and platform of the 30S subunit. The sequence is that of Small ribosomal subunit protein uS12 from Thioalkalivibrio sulfidiphilus (strain HL-EbGR7).